Consider the following 256-residue polypeptide: Deoxyribose-phosphate aldolase (256 aa).

Residue D102 is the Proton donor/acceptor of the active site. K165 functions as the Schiff-base intermediate with acetaldehyde in the catalytic mechanism. K197 (proton donor/acceptor) is an active-site residue.

The protein belongs to the DeoC/FbaB aldolase family. DeoC type 2 subfamily.

It localises to the cytoplasm. The catalysed reaction is 2-deoxy-D-ribose 5-phosphate = D-glyceraldehyde 3-phosphate + acetaldehyde. The protein operates within carbohydrate degradation; 2-deoxy-D-ribose 1-phosphate degradation; D-glyceraldehyde 3-phosphate and acetaldehyde from 2-deoxy-alpha-D-ribose 1-phosphate: step 2/2. Its function is as follows. Catalyzes a reversible aldol reaction between acetaldehyde and D-glyceraldehyde 3-phosphate to generate 2-deoxy-D-ribose 5-phosphate. This is Deoxyribose-phosphate aldolase from Shewanella sp. (strain W3-18-1).